The following is a 148-amino-acid chain: Small ribosomal subunit protein bS6 (148 aa).

The segment at 96–148 (HEEGQSAMLTRRDDRRERDGDDRPRRREGGFDRGDRGDRGPRRPRDNEAGEGA) is disordered.

This sequence belongs to the bacterial ribosomal protein bS6 family.

Functionally, binds together with bS18 to 16S ribosomal RNA. In Brucella melitensis biotype 1 (strain ATCC 23456 / CCUG 17765 / NCTC 10094 / 16M), this protein is Small ribosomal subunit protein bS6.